The primary structure comprises 1135 residues: Vinculin (1135 aa).

Residues Pro2–Phe835 are N-terminal globular head. Tyr100 bears the Phosphotyrosine mark. Residues Met168–Ala208 form a talin-interaction region. Repeat copies occupy residues Ala259 to Asn369, Ala370 to Arg479, and Ala480 to Glu589. Residues Ala259–Glu589 are 3 X 112 AA tandem repeats. Residues Tyr537 and Tyr822 each carry the phosphotyrosine modification. Residues Gln836–Pro878 form a linker (Pro-rich) region. The tract at residues Pro837–Gln888 is disordered. The span at Pro860–Pro876 shows a compositional bias: pro residues. Residues Glu879 to Gln1135 are C-terminal tail. Facilitates phospholipid membrane insertion stretches follow at residues Arg1004–Arg1047 and Ala1121–Gln1135. A Phosphotyrosine; by SRC-type Tyr-kinases modification is found at Tyr1134.

It belongs to the vinculin/alpha-catenin family. As to quaternary structure, exhibits self-association properties. Interacts with APBB1IP, NRAP and TLN1. Interacts with CTNNB1 and this interaction is necessary for its localization to the cell-cell junctions and for its function in regulating cell surface expression of E-cadherin. Post-translationally, phosphorylated; on serines, threonines and tyrosines. Phosphorylation on Tyr-1134 in activated platelets affects head-tail interactions and cell spreading but has no effect on actin binding nor on localization to focal adhesion plaques. Acetylated; mainly by myristic acid but also by a small amount of palmitic acid. In terms of tissue distribution, isoform Metavinculin is muscle-specific.

The protein resides in the cell membrane. It localises to the cell junction. Its subcellular location is the adherens junction. It is found in the focal adhesion. The protein localises to the cytoplasm. The protein resides in the cytoskeleton. It localises to the sarcolemma. Its subcellular location is the cell projection. It is found in the podosome. Actin filament (F-actin)-binding protein involved in cell-matrix adhesion and cell-cell adhesion. Regulates cell-surface E-cadherin expression and potentiates mechanosensing by the E-cadherin complex. May also play important roles in cell morphology and locomotion. The polypeptide is Vinculin (VCL) (Gallus gallus (Chicken)).